We begin with the raw amino-acid sequence, 235 residues long: Large ribosomal subunit protein uL1 (235 aa).

It belongs to the universal ribosomal protein uL1 family. In terms of assembly, part of the 50S ribosomal subunit.

In terms of biological role, binds directly to 23S rRNA. The L1 stalk is quite mobile in the ribosome, and is involved in E site tRNA release. Protein L1 is also a translational repressor protein, it controls the translation of the L11 operon by binding to its mRNA. This is Large ribosomal subunit protein uL1 from Synechococcus sp. (strain CC9311).